We begin with the raw amino-acid sequence, 176 residues long: MRLSLAAAISHGRVYRRLGLGPESRIHLLRNLLTGLVRHERIEATWARVDEMRGYAEKLIDYGKLGDTNERAMRMADFWLTEKDLIPKLFKVLAPRFQGQNGNYTRMLQIPNRKEQDRAKMAVIEYKGNCLPPLPLPHRDSNLTLLNQLLLGLQQDLHHNQKASLHSSHTVQTPKT.

The N-terminal 8 residues, 1–8 (MRLSLAAA), are a transit peptide targeting the mitochondrion.

The protein belongs to the bacterial ribosomal protein bL17 family. Component of the mitochondrial ribosome large subunit (39S) which comprises a 16S rRNA and about 50 distinct proteins.

It is found in the mitochondrion. The chain is Large ribosomal subunit protein bL17m (Mrpl17) from Rattus norvegicus (Rat).